The primary structure comprises 145 residues: Transcription antitermination protein NusB (145 aa).

Belongs to the NusB family.

Involved in transcription antitermination. Required for transcription of ribosomal RNA (rRNA) genes. Binds specifically to the boxA antiterminator sequence of the ribosomal RNA (rrn) operons. This Burkholderia vietnamiensis (strain G4 / LMG 22486) (Burkholderia cepacia (strain R1808)) protein is Transcription antitermination protein NusB.